Consider the following 1077-residue polypeptide: Rap guanine nucleotide exchange factor 1 (1077 aa).

A Glycyl lysine isopeptide (Lys-Gly) (interchain with G-Cter in SUMO2) cross-link involves residue Leu57. Disordered regions lie at residues 207-235 and 248-300; these read IEKQGRPSPTSPVKPSSPASKPDGPAELP and TGMS…PTRV. Low complexity predominate over residues 213–228; the sequence is PSPTSPVKPSSPASKP. Ser281, Ser293, Ser314, Ser335, and Ser360 each carry phosphoserine. Positions 281–292 match the SH3-binding motif; that stretch reads SPPPALPPKKRQ. 2 disordered regions span residues 336 to 376 and 411 to 494; these read GGSH…QCSR and LSPL…EDLQ. The segment covering 358-371 has biased composition (basic and acidic residues); the sequence is SKSDEQLSSLDRDS. Positions 451–462 match the SH3-binding motif; it reads DTPPALPEKKRR. Polar residues predominate over residues 484–494; it reads QYDNISGEDLQ. Tyr504 bears the Phosphotyrosine; by HCK mark. 2 short sequence motifs (SH3-binding) span residues 538–549 and 606–617; these read EKPPPLPEKKNK and APPPALPPKQRQ. The segment at 600 to 670 is disordered; sequence DSVQELAPPP…SEEEVDELSL (71 aa). Basic and acidic residues predominate over residues 640–651; the sequence is KDSRDGSERAPK. Acidic residues predominate over residues 660–669; it reads QSEEEVDELS. Residues 688 to 810 enclose the N-terminal Ras-GEF domain; sequence DGPDVRGGSG…LRKNILDKVD (123 aa). A Ras-GEF domain is found at 840-1064; the sequence is HSHEIAEQLT…WELSLKIKPR (225 aa).

In terms of assembly, interacts with HCK (via SH3-binding sites). Interacts with CRK (via SH3-binding sites). In terms of processing, phosphorylation at Tyr-504 enhances activity as Rap guanine nucleotide exchange factor. As to expression, ubiquitously expressed in adult and fetus. Expression is high in adult skeletal muscle and placenta and in fetal brain and heart. Low levels of expression in adult and fetal liver.

The protein resides in the early endosome. Functionally, guanine nucleotide-releasing protein that binds to SH3 domain of CRK and GRB2/ASH. Transduces signals from CRK to activate RAS. Involved in cell branching and adhesion mediated by BCAR1-CRK-RAPGEF1 signaling and activation of RAP1. Plays a role in the establishment of basal endothelial barrier function. Plays a role in nerve growth factor (NGF)-induced sustained activation of Rap1 and neurite outgrowth. The chain is Rap guanine nucleotide exchange factor 1 (RAPGEF1) from Homo sapiens (Human).